Here is a 539-residue protein sequence, read N- to C-terminus: Tyrosinase (539 aa).

Cu cation contacts are provided by His63, His84, His93, His290, His294, and His333. Positions 82–84 (CHH) form a cross-link, 2'-(S-cysteinyl)-histidine (Cys-His).

Belongs to the tyrosinase family. Homotetramer. It depends on Cu(2+) as a cofactor. In terms of processing, the N-terminus is blocked.

It catalyses the reaction 2 L-dopa + O2 = 2 L-dopaquinone + 2 H2O. The catalysed reaction is L-tyrosine + O2 = L-dopaquinone + H2O. Its activity is regulated as follows. Activated by acidifying treatment at pH 3.0. This is a copper-containing oxidase that functions in the formation of pigments such as melanins and other polyphenolic compounds. The sequence is that of Tyrosinase (melO) from Aspergillus oryzae (strain ATCC 42149 / RIB 40) (Yellow koji mold).